The chain runs to 432 residues: C(50) beta-cyclic carotenoids biosynthesis protein LbtBC (432 aa).

A beta-cyclase region spans residues 1–140 (MTSLYTTLNL…DDDEVRTPER (140 aa)). The next 3 helical transmembrane spans lie at 4–24 (LYTT…LLAA), 36–56 (LIGV…FDNI), and 83–103 (FAYA…LTAS). Residues 111-140 (GSPTVSGRGDALLTRAPEPGDDDEVRTPER) are disordered. The segment at 141–432 (PGTPGLLTTL…IVLWSVLVWS (292 aa)) is elongase/hydratase. 7 helical membrane passes run 170 to 190 (YFLA…FFLV), 252 to 272 (ESSL…AKGL), 277 to 297 (IPFL…IVGW), 299 to 319 (IAGA…MLWG), 350 to 370 (AAVW…LAAA), 374 to 394 (ASGA…YVGV), and 409 to 429 (FLVL…WSVL).

Belongs to the UbiA prenyltransferase family. As to quaternary structure, may form a complex with LbtA.

It is found in the cell membrane. It carries out the reaction all-trans-lycopene + dimethylallyl diphosphate + H2O = dihydroisopentenyldehydrorhodopin + diphosphate. It catalyses the reaction isopentenyldehydrorhodopin + dimethylallyl diphosphate + H2O = dihydrobisanhydrobacterioruberin + diphosphate. The protein operates within carotenoid biosynthesis. In terms of biological role, involved in the biosynthesis of C(50) beta-cyclic carotenoids. The elongase/hydratase domain catalyzes the elongation of lycopene by attaching a C(5) isoprene unit at C-2, as well as the hydroxylation of the previous end of the molecule. The enzyme acts at both ends of the substrate, and catalyzes the conversion of lycopene to the C(45) intermediate dihydroisopentenyldehydrorhodopin (DH-IDR) and the conversion of isopentenyldehydrorhodopin (IDR) to the C(50) carotenoid dihydrobisanhydrobacterioruberin (DH-BABR). The beta-cyclase domain may produce the C(50) beta-cyclic carotenoid C.p.450 from the C(50) carotenoid dihydrobisanhydrobacterioruberin (DH-BABR). The sequence is that of C(50) beta-cyclic carotenoids biosynthesis protein LbtBC from Dietzia sp. (strain CQ4).